The chain runs to 656 residues: Protein EMBRYO SAC DEVELOPMENT ARREST 30 (656 aa).

Residues 9-29 (WIALFVLILSMGSLVVHLSMT) form a helical; Signal-anchor for type II membrane protein membrane-spanning segment. Asn119 carries an N-linked (GlcNAc...) asparagine glycan. Residues 381–426 (LSELVGPETPLPENTYKMPPRKSDKQLKEEWNKAGPRPRPLPPPPD) form a disordered region. Basic and acidic residues predominate over residues 401–412 (RKSDKQLKEEWN). A compositionally biased stretch (pro residues) spans 417 to 426 (RPRPLPPPPD). Residues Asn444, Asn522, Asn534, and Asn544 are each glycosylated (N-linked (GlcNAc...) asparagine). Residues 631–656 (SETEEEFAKSKVASAFDQDEEWDPND) form a disordered region. A compositionally biased stretch (acidic residues) spans 647-656 (DQDEEWDPND).

It belongs to the glycosyltransferase GT106 family.

It is found in the membrane. It functions in the pathway glycan metabolism. The protein is Protein EMBRYO SAC DEVELOPMENT ARREST 30 of Arabidopsis thaliana (Mouse-ear cress).